The primary structure comprises 284 residues: Tropomyosin Tod p 1.0102 (284 aa).

Positions 15-273 form a coiled coil; the sequence is KEVATDKAEQ…KERYKSISDE (259 aa). A disordered region spans residues 103–136; sequence EERLTSAQSKLEDASKAADESERGRKVLENRSQG.

The protein belongs to the tropomyosin family. Homodimer. Post-translationally, the N-terminus is blocked. In terms of tissue distribution, expressed in mantle muscle (at protein level).

Its function is as follows. Tropomyosin, in association with the troponin complex, plays a central role in the calcium dependent regulation of muscle contraction. This Todarodes pacificus (Japanese flying squid) protein is Tropomyosin Tod p 1.0102.